The primary structure comprises 77 residues: VpAmp2.0 (77 aa).

Positions 1 to 23 are cleaved as a signal peptide; sequence MQLRKALLVIFVAYLLVTDEAEA. A propeptide spanning residues 49 to 77 is cleaved from the precursor; it reads RKREIEDLFDPYQKDLDLQRLDRFFSQFQ.

The protein belongs to the non-disulfide-bridged peptide (NDBP) superfamily. Medium-length antimicrobial peptide (group 3) family. Expressed by the venom gland.

It is found in the secreted. The protein localises to the target cell membrane. In terms of biological role, antimicrobial peptide with potent activity against Gram-positive bacteria S.aureus (MIC=10 uM) and S.agalactiaea (MIC=15 uM), and Gram-negative bacteria E.coli (MIC=24 uM) and P.aeruginosa (MIC=15 uM), as well as against yeasts Candida albicans (MIC=3.1 uM) and C.glabrata (MIC=25 uM). Also elicits low hemolysis on human erythrocytes (HC(50)=167 uM). The sequence is that of VpAmp2.0 from Mesomexovis punctatus (Scorpion).